A 119-amino-acid chain; its full sequence is Ribonuclease P protein component (119 aa).

Belongs to the RnpA family. Consists of a catalytic RNA component (M1 or rnpB) and a protein subunit.

It catalyses the reaction Endonucleolytic cleavage of RNA, removing 5'-extranucleotides from tRNA precursor.. Functionally, RNaseP catalyzes the removal of the 5'-leader sequence from pre-tRNA to produce the mature 5'-terminus. It can also cleave other RNA substrates such as 4.5S RNA. The protein component plays an auxiliary but essential role in vivo by binding to the 5'-leader sequence and broadening the substrate specificity of the ribozyme. The chain is Ribonuclease P protein component from Syntrophus aciditrophicus (strain SB).